The sequence spans 208 residues: Large ribosomal subunit protein bL25 (208 aa).

Belongs to the bacterial ribosomal protein bL25 family. CTC subfamily. In terms of assembly, part of the 50S ribosomal subunit; part of the 5S rRNA/L5/L18/L25 subcomplex. Contacts the 5S rRNA. Binds to the 5S rRNA independently of L5 and L18.

Its function is as follows. This is one of the proteins that binds to the 5S RNA in the ribosome where it forms part of the central protuberance. The sequence is that of Large ribosomal subunit protein bL25 from Leptothrix cholodnii (strain ATCC 51168 / LMG 8142 / SP-6) (Leptothrix discophora (strain SP-6)).